The following is a 475-amino-acid chain: Homeobox even-skipped homolog protein 2 (475 aa).

Disordered stretches follow at residues Pro82 to Asp113 and Thr155 to Asp189. Over residues Ser83–Thr96 the composition is skewed to low complexity. Residues Ser160–Ser186 show a composition bias toward gly residues. The segment at residues Val191–Arg250 is a DNA-binding region (homeobox).

This sequence belongs to the even-skipped homeobox family.

The protein resides in the nucleus. The polypeptide is Homeobox even-skipped homolog protein 2 (Evx2) (Mus musculus (Mouse)).